Here is an 860-residue protein sequence, read N- to C-terminus: Glucans biosynthesis glucosyltransferase H (860 aa).

6 consecutive transmembrane segments (helical) span residues 141–161, 187–207, 515–535, 572–592, 599–619, and 682–702; these read FILL…MKGI, VLPY…FCWV, VFLT…FLVL, LFST…MLIW, FGGV…SVLL, and FLWW…VSVI.

This sequence belongs to the glycosyltransferase 2 family. OpgH subfamily.

The protein resides in the cell inner membrane. It participates in glycan metabolism; osmoregulated periplasmic glucan (OPG) biosynthesis. Its function is as follows. Involved in the biosynthesis of osmoregulated periplasmic glucans (OPGs). The sequence is that of Glucans biosynthesis glucosyltransferase H from Pseudomonas paraeruginosa (strain DSM 24068 / PA7) (Pseudomonas aeruginosa (strain PA7)).